The following is a 702-amino-acid chain: Cell adhesion molecule CEACAM5 (702 aa).

The first 34 residues, 1-34 (MESPSAPPHRWCIPWQRLLLTASLLTFWNPPTTA), serve as a signal peptide directing secretion. One can recognise an Ig-like V-type domain in the interval 35–144 (KLTIESTPFN…TGQFRVYPEL (110 aa)). Residues N104, N115, N152, N182, N197, N204, N208, N246, N256, N274, N288, N292, N309, N330, N351, N360, N375, N432, N466, N480, N508, N529, N553, N560, N580, N612, N650, and N665 are each glycosylated (N-linked (GlcNAc...) asparagine). Ig-like C2-type domains are found at residues 145–232 (PKPS…VILN), 240–315 (PTIS…TVTT), 323–410 (PKPF…VILN), 418–495 (PTIS…KTIT), 501–588 (PKPS…VTLD), and 593–675 (PDTP…ITVS). C167 and C215 are oxidised to a cystine. Cysteines 259 and 299 form a disulfide. Cysteines 345 and 393 form a disulfide. An intrachain disulfide couples C437 to C477. A disulfide bridge links C523 with C571. C615 and C655 form a disulfide bridge. A685 carries the GPI-anchor amidated alanine lipid modification. Residues 686–702 (GATVGIMIGVLVGVALI) constitute a propeptide, removed in mature form.

The protein belongs to the immunoglobulin superfamily. CEA family. As to quaternary structure, homodimer. Complex immunoreactive glycoprotein with a MW of 180 kDa comprising 60% carbohydrate. In terms of tissue distribution, expressed in columnar epithelial and goblet cells of the colon (at protein level). Found in adenocarcinomas of endodermally derived digestive system epithelium and fetal colon.

Its subcellular location is the cell membrane. It is found in the apical cell membrane. It localises to the cell surface. In terms of biological role, cell surface glycoprotein that plays a role in cell adhesion, intracellular signaling and tumor progression. Mediates homophilic and heterophilic cell adhesion with other carcinoembryonic antigen-related cell adhesion molecules, such as CEACAM6. Plays a role as an oncogene by promoting tumor progression; induces resistance to anoikis of colorectal carcinoma cells. Functionally, (Microbial infection) Receptor for E.coli Dr adhesins. Binding of E.coli Dr adhesins leads to dissociation of the homodimer. The protein is Cell adhesion molecule CEACAM5 of Homo sapiens (Human).